The primary structure comprises 521 residues: Envelope glycoprotein C homolog (521 aa).

Positions 1–21 (MGPLGRAWLIAAIFAWALLSA) are cleaved as a signal peptide. Residues 22 to 475 (RRGLAEEAEA…DASPGLIGSP (454 aa)) lie on the Virion surface side of the membrane. A disordered region spans residues 24 to 138 (GLAEEAEASP…PSKAPPKERK (115 aa)). Low complexity predominate over residues 41–54 (PTETESSAGTTGAT). Over residues 66-76 (EDSTPGATTPV) the composition is skewed to polar residues. N-linked (GlcNAc...) asparagine; by host glycosylation occurs at Asn-111. Cys-142 and Cys-159 are oxidised to a cystine. In terms of domain architecture, Ig-like V-type spans 155-227 (LYVHCGVADN…LGDNYIFPSP (73 aa)). N-linked (GlcNAc...) asparagine; by host glycans are attached at residues Asn-164 and Asn-208. Cystine bridges form between Cys-290-Cys-351, Cys-390-Cys-447, and Cys-394-Cys-421. The region spanning 386–451 (GEAVCEARCV…PVDYTCTATG (66 aa)) is the Ig-like C2-type domain. A helical transmembrane segment spans residues 476 to 496 (VLVSVVAVACGLGAVGLLLVA). The Cytoplasmic portion of the chain corresponds to 497–521 (ASCLRRKARVIQPGLTRARALGSAP).

This sequence belongs to the herpesviridae glycoprotein C family. As to quaternary structure, interacts with host complement component C3; this interaction inhibits host immune response by disregulating complement cascade.

It localises to the virion membrane. Essential for the initial attachment to heparan sulfate moieties of the host cell surface proteoglycans. Plays also a role in host immune evasion by inhibiting the host complement cascade activation. The sequence is that of Envelope glycoprotein C homolog (gC) from Bovine herpesvirus 1.1 (strain Cooper) (BoHV-1).